Here is a 452-residue protein sequence, read N- to C-terminus: Neuromedin-K receptor (452 aa).

Topologically, residues Met1–Arg71 are extracellular. Asn9, Asn23, Asn40, and Asn60 each carry an N-linked (GlcNAc...) asparagine glycan. A helical membrane pass occupies residues Ile72–Ile94. Residues Trp95 to Arg104 lie on the Cytoplasmic side of the membrane. A helical membrane pass occupies residues Thr105–Thr126. Over Leu127 to Arg146 the chain is Extracellular. Cys145 and Cys220 are oxidised to a cystine. The helical transmembrane segment at Phe147–Val168 threads the bilayer. At Asp169–Lys188 the chain is on the cytoplasmic side. The helical transmembrane segment at Ile189 to Ser209 threads the bilayer. The Extracellular segment spans residues Lys210–Phe232. Residues Thr233–Val257 form a helical membrane-spanning segment. Topologically, residues Gly258–Lys286 are cytoplasmic. A helical transmembrane segment spans residues Met287–Leu308. The Extracellular segment spans residues Thr309–Ile321. The helical transmembrane segment at Gln322–Leu346 threads the bilayer. Over Asn347 to Ser452 the chain is Cytoplasmic. Cys361 carries the S-palmitoyl cysteine lipid modification. The interval Phe400–Ser452 is disordered. Residues Lys432–Ser452 show a composition bias toward low complexity.

Belongs to the G-protein coupled receptor 1 family. Post-translationally, the anchoring of this receptor to the plasma membrane is probably mediated by the palmitoylation of a cysteine residue.

Its subcellular location is the cell membrane. Its function is as follows. This is a receptor for the tachykinin neuropeptide neuromedin-K (neurokinin B). It is associated with G proteins that activate a phosphatidylinositol-calcium second messenger system. The rank order of affinity of this receptor to tachykinins is: neuromedin-K &gt; substance K &gt; substance P. This Rattus norvegicus (Rat) protein is Neuromedin-K receptor (Tacr3).